A 331-amino-acid chain; its full sequence is Septin homolog spn2 (331 aa).

Residues 29–301 (RGFQFNVMVV…EKFRFKQLSS (273 aa)) enclose the Septin-type G domain. Residues 39–46 (GPSGSGKS) are G1 motif. GTP contacts are provided by residues 39-46 (GPSGSGKS), Thr-73, Gly-99, 179-187 (KSDSLTLEE), Gly-235, and Arg-250. The tract at residues 96–99 (DTPG) is G3 motif. The segment at 178–181 (AKSD) is G4 motif. Residues 311–331 (RMGSPAPVYPSEPHLHTATAQ) form a disordered region.

This sequence belongs to the TRAFAC class TrmE-Era-EngA-EngB-Septin-like GTPase superfamily. Septin GTPase family. As to quaternary structure, component of the septin complex composed of two copies of each spn1, spn2, spn3 and spn4. Component of the sporulation-specific septin complex composed of at least spn2, spn5, spn6 and spn7.

It is found in the cytoplasm. It localises to the cell cortex. Its subcellular location is the forespore membrane. Its function is as follows. Plays a role in the cell cycle. Involved in a late stage of septum formation leading to the separation of the daughter cells. Involved in the correct orientation of forespore membrane extension during sporulation. Binds phosphatidylinositol 4-phosphate. In Schizosaccharomyces pombe (strain 972 / ATCC 24843) (Fission yeast), this protein is Septin homolog spn2 (spn2).